Reading from the N-terminus, the 208-residue chain is N-hydroxyputrescine acetyltransferase (208 aa).

The protein belongs to the IucB family.

It catalyses the reaction N-hydroxyputrescine + acetyl-CoA = N(1)-acetyl-N(1)-hydroxyputrescine + CoA. Its pathway is siderophore biosynthesis. Its function is as follows. N-acetyltransferase involved in the biosynthesis of fimsbactin A, the major siderophore produced by A.baumannii. Catalyzes the acetylation of N-hydroxyputrescine to form N(1)-acetyl-N(1)-hydroxyputrescine (ahPutr). This Acinetobacter baumannii (strain ATCC 17978 / DSM 105126 / CIP 53.77 / LMG 1025 / NCDC KC755 / 5377) protein is N-hydroxyputrescine acetyltransferase.